A 100-amino-acid chain; its full sequence is Replication restart protein PriB (100 aa).

The SSB domain occupies 4 to 99; sequence TNLVSLAALI…LRIQNIKEYK (96 aa).

The protein belongs to the PriB family. In terms of assembly, homodimer. Component of the replication restart primosome. Primosome assembly occurs via a 'hand-off' mechanism. PriA binds to replication forks, subsequently PriB then DnaT bind; DnaT then displaces ssDNA to generate the helicase loading substrate. Interacts with PriA with high affinity, independent of DNA presence.

PriA:PriB complex-catalyzed duplex DNA winding is inhibited by CGS 15943 (CHEBI:131351); PriA is the drug target. Functionally, stimulates the DNA unwinding activity of PriA helicase, which does not seem to require single-stranded (ss)DNA-binding by PriB. Activates DNA-dependent ATP hydrolysis catalyzed by PriA. Weakly binds ssDNA. Weakly binds double-stranded (ds)DNA, a partial duplex DNA with a 3' ssDNA overhang, and a forked DNA structure with fully duplex leading and lagging strand arms in vitro. Its function is as follows. Involved in the restart of stalled replication forks, which reloads the replicative helicase on sites other than the origin of replication; the PriA-PriB pathway is the major replication restart pathway. During primosome assembly it facilitates complex formation between PriA and DnaT on DNA; stabilizes PriA on DNA. Stimulates the DNA unwinding activity of PriA helicase. This Neisseria gonorrhoeae (strain ATCC 700825 / FA 1090) protein is Replication restart protein PriB.